A 78-amino-acid chain; its full sequence is uncharacterized protein (78 aa).

Positions glutamate 56–glutamate 66 are enriched in basic and acidic residues. The disordered stretch occupies residues glutamate 56 to aspartate 78.

This is an uncharacterized protein from Saccharomyces cerevisiae (strain ATCC 204508 / S288c) (Baker's yeast).